Here is an 89-residue protein sequence, read N- to C-terminus: Large ribosomal subunit protein bL27 (89 aa).

The disordered stretch occupies residues 1-22 (MAHKKAGGSSRNGRDSAGRRLG).

It belongs to the bacterial ribosomal protein bL27 family.

The sequence is that of Large ribosomal subunit protein bL27 from Sphingopyxis alaskensis (strain DSM 13593 / LMG 18877 / RB2256) (Sphingomonas alaskensis).